The primary structure comprises 112 residues: Larval cuticle protein III/IV (112 aa).

A signal peptide spans 1–16 (MFKILLVCALAALVAA). The Chitin-binding type R&amp;R domain maps to 31–92 (PDGFKTVVSL…PSSDLLPVAP (62 aa)).

Component of the larval cuticle. The polypeptide is Larval cuticle protein III/IV (Lcp3) (Drosophila miranda (Fruit fly)).